A 139-amino-acid chain; its full sequence is Putative pre-16S rRNA nuclease (139 aa).

It belongs to the YqgF nuclease family.

It localises to the cytoplasm. Functionally, could be a nuclease involved in processing of the 5'-end of pre-16S rRNA. This Streptococcus thermophilus (strain ATCC BAA-491 / LMD-9) protein is Putative pre-16S rRNA nuclease.